Here is a 219-residue protein sequence, read N- to C-terminus: Intraflagellar transport protein 22 (219 aa).

GTP-binding positions include 12–19 and 72–79; these read GPSKSGKS and WDVGGSSK.

Belongs to the small GTPase superfamily. Rab family.

Its subcellular location is the cytoplasm. It is found in the cytoskeleton. The protein resides in the flagellum basal body. It localises to the cell projection. The protein localises to the cilium. Its subcellular location is the flagellum. In terms of biological role, required for flagellum formation. The chain is Intraflagellar transport protein 22 (IFT22) from Trypanosoma brucei brucei (strain 927/4 GUTat10.1).